Consider the following 422-residue polypeptide: Elongation factor 1-gamma (422 aa).

The 82-residue stretch at 1–82 folds into the GST N-terminal domain; sequence MALVLHAGKT…YVARLKADNP (82 aa). In terms of domain architecture, GST C-terminal spans 87–215; that stretch reads SLIDYAHIEQ…VKQTESVPPV (129 aa). The tract at residues 210–269 is disordered; it reads ESVPPVPSAKKPSQPKETKSKAKEEPKKEAKKEPAKPKAEAAEEVEEAPKPKPKNPLDLL. Residues 223 to 250 show a composition bias toward basic and acidic residues; it reads QPKETKSKAKEEPKKEAKKEPAKPKAEA. Residues 262 to 422 form the EF-1-gamma C-terminal domain; sequence PKNPLDLLPP…EALLDAKCFK (161 aa).

EF-1 is composed of four subunits: alpha, beta, delta, and gamma.

Probably plays a role in anchoring the complex to other cellular components. The polypeptide is Elongation factor 1-gamma (Prunus avium (Cherry)).